The chain runs to 219 residues: Germin-like protein subfamily 2 member 1 (219 aa).

Positions 1 to 21 are cleaved as a signal peptide; that stretch reads MASPTLTLLLLLTTVSFFISS. Cys32 and Cys47 form a disulfide bridge. The Cupin type-1 domain occupies 61–209; the sequence is QGLAKPGLTN…AFQTSPGTVK (149 aa). The N-linked (GlcNAc...) asparagine glycan is linked to Asn70. The Mn(2+) site is built by His109, His111, Glu116, and His155.

Belongs to the germin family. In terms of assembly, oligomer (believed to be a pentamer but probably hexamer).

The protein localises to the secreted. The protein resides in the extracellular space. It is found in the apoplast. May play a role in plant defense. Probably has no oxalate oxidase activity even if the active site is conserved. The protein is Germin-like protein subfamily 2 member 1 (GLP4) of Arabidopsis thaliana (Mouse-ear cress).